A 452-amino-acid chain; its full sequence is Lamina-associated polypeptide 2, isoforms beta/delta/epsilon/gamma (452 aa).

The segment at 1–409 (MPEFLEDPSV…KSEKTKKRRS (409 aa)) is nucleoplasmic. The 44-residue stretch at 5–48 (LEDPSVLTKDKLKSELVANNVTLPAGEQRKDVYVQLYLQHLTAR) folds into the LEM-like domain. 2 disordered regions span residues 48-111 (RNRP…DLDV) and 149-263 (REQG…RVET). The segment at 49-108 (NRPPLAAGANSKGPPDFSSDEEREPTPVLGSGASVGRGRGAVGRKATKKTDKPRLEDKDD) is linker. Ser59, Ser66, and Ser67 each carry phosphoserine. Phosphothreonine is present on Thr74. 2 positions are modified to phosphoserine: Ser79 and Ser82. Omega-N-methylarginine occurs at positions 85 and 87. Positions 96–105 (KKTDKPRLED) are enriched in basic and acidic residues. Positions 109-153 (LDVTELSNEELLDQLVRYGVNPGPIVGTTRKLYEKKLLKLREQGT) constitute an LEM domain. The segment at 137–242 (TRKLYEKKLL…TSGSSTGGPL (106 aa)) is NAKAP95-binding N. Thr153 is subject to Phosphothreonine. A compositionally biased stretch (polar residues) spans 154–177 (ESRSSTPLPTVSSSAENTRQNGSN). Phosphoserine occurs at positions 155 and 158. 2 positions are modified to phosphothreonine: Thr159 and Thr163. A phosphoserine mark is found at Ser165, Ser167, and Ser176. Over residues 178–202 (DSDRYSDNDEDSKIELKLEKREPLK) the composition is skewed to basic and acidic residues. At Ser179 the chain carries Phosphoserine; by PKC. 2 positions are modified to phosphoserine: Ser183 and Ser189. Residue Lys206 is modified to N6-acetyllysine. At Thr210 the chain carries Phosphothreonine. Residues Ser221 and Ser223 each carry the phosphoserine modification. The span at 226-240 (GVTETEWTSGSSTGG) shows a compositional bias: low complexity. 6 positions are modified to phosphoserine: Ser249, Ser253, Ser264, Ser291, Ser305, and Ser306. Residues 298–370 (TGNFKHASSI…SCRRPIKGAA (73 aa)) are binds lamins B. An NAKAP95-binding C region spans residues 299–373 (GNFKHASSIL…RPIKGAAGRP (75 aa)). The residue at position 311 (Thr311) is a Phosphothreonine. A Phosphoserine modification is found at Ser314. Position 319 is a citrulline (Arg319). Phosphoserine is present on residues Ser361, Ser377, and Ser384. At Lys388 the chain carries N6-acetyllysine. A Glycyl lysine isopeptide (Lys-Gly) (interchain with G-Cter in SUMO2) cross-link involves residue Lys400. Ser401 carries the post-translational modification Phosphoserine. A helical; Signal-anchor for type II membrane protein transmembrane segment spans residues 410-430 (VPMWIKMLLFALVAVFLFLVY). Residues 431-452 (QAMETNQGNPFTNFLQDTKISN) are Lumenal-facing.

It belongs to the LEM family. As to quaternary structure, interacts with LMNB1, LMNB2, BANF1, AKAP8L, GMCL and chromosomes. Post-translationally, mitosis-specific phosphorylation specifically abolishes its binding to lamin B and chromosomes. Citrullinated by PADI4.

Its subcellular location is the nucleus inner membrane. The protein localises to the chromosome. Functionally, may help direct the assembly of the nuclear lamina and thereby help maintain the structural organization of the nuclear envelope. Possible receptor for attachment of lamin filaments to the inner nuclear membrane. May be involved in the control of initiation of DNA replication through its interaction with NAKAP95. This chain is Lamina-associated polypeptide 2, isoforms beta/delta/epsilon/gamma (Tmpo), found in Mus musculus (Mouse).